A 453-amino-acid polypeptide reads, in one-letter code: Divalent metal cation transporter MntH (453 aa).

11 consecutive transmembrane segments (helical) span residues 39 to 59, 66 to 86, 114 to 134, 146 to 166, 175 to 195, 217 to 237, 270 to 290, 310 to 330, 362 to 382, 388 to 408, and 427 to 447; these read LAFL…GNWI, AQYG…AMLL, AIMF…AEVI, IPLI…LFIM, AIVG…VYIS, GILY…NLYL, LSIA…LFFG, PALG…ALLA, LITR…FKGN, QLLV…LIPL, and INII…YLII.

The protein belongs to the NRAMP family.

The protein localises to the cell membrane. Its function is as follows. H(+)-stimulated, divalent metal cation uptake system. The sequence is that of Divalent metal cation transporter MntH from Staphylococcus epidermidis (strain ATCC 12228 / FDA PCI 1200).